Consider the following 433-residue polypeptide: Gamma-glutamyl phosphate reductase (433 aa).

Belongs to the gamma-glutamyl phosphate reductase family.

It is found in the cytoplasm. It carries out the reaction L-glutamate 5-semialdehyde + phosphate + NADP(+) = L-glutamyl 5-phosphate + NADPH + H(+). Its pathway is amino-acid biosynthesis; L-proline biosynthesis; L-glutamate 5-semialdehyde from L-glutamate: step 2/2. Catalyzes the NADPH-dependent reduction of L-glutamate 5-phosphate into L-glutamate 5-semialdehyde and phosphate. The product spontaneously undergoes cyclization to form 1-pyrroline-5-carboxylate. The polypeptide is Gamma-glutamyl phosphate reductase (Psychrobacter cryohalolentis (strain ATCC BAA-1226 / DSM 17306 / VKM B-2378 / K5)).